The sequence spans 71 residues: Large ribosomal subunit protein uL29 (71 aa).

The protein belongs to the universal ribosomal protein uL29 family. Part of the 50S ribosomal subunit. Interacts with protein L23.

In terms of biological role, stabilizes the tertiary rRNA structure within the 23S rRNA domain (domain I) to which it binds. Located at the polypeptide exit tunnel on the outside of the subunit. The polypeptide is Large ribosomal subunit protein uL29 (rpl29) (Haloarcula marismortui (strain ATCC 43049 / DSM 3752 / JCM 8966 / VKM B-1809) (Halobacterium marismortui)).